We begin with the raw amino-acid sequence, 804 residues long: MSFQHRQIEKKWQDYWEDNKTFKTDTFSNKEKFYALDMFPYPSGQGLHVGHPEGYTATDILARMKRMQGYEVMHPMGWDAFGLPAEQYAIDTGNSPAEFTNQNINTFKRQIKELGFSYDWDREINTTDPNYYKWTQWIFKKLYENDLAYMDEVAVNWCPALGTVLANEEVIDGKSERGGHPVIRKPMKQWMLKITAYADRLLEDLNELDWPDSLKEMQRNWIGRSEGAEVTFSIKGNEGTFTVFTTRPDTLFGATYAVVAPEHPLVKEITTLSQKEAVQNYLDEIQTKSDLERTDLAKDKTGVFTGAYAINPVNGEEMPIWVADYVLMSYGTGAIMAVPAHDERDYEFANTFGLPIKEVVAGGNIDDEAYTGDGEHVNSEFLNGLGKEEAITKMIDWLEANGSGEKKITYRLRDWLFARQRYWGEPIPIIHWEDGTMTAVPDEDLPLTLPQVAEIKPSGTGESPLANNTDWVNVVDPETGLKGRRETNTMPQWAGSCWYFLRYIDPNNTERLADPKALEEWLPIDIYIGGAEHAVLHLLYARFWHKFLFDIGVVSTKEPFQKLYNQGMILGEGNEKMSKSKGNVVNPDDIIDSHGADTLRLYEMFMGPLDASVAWSTNGLDGSRRFLDRVWRLYVGDDGSLTDKIIDDESTELDKIYHETVKKVTDDFEHMHFNTGISQMMVFINECYKANKIPKIYAEGFVKLLSPVAPHLSEEIWQKLGHSESISKATWPAYDESKLVEDEVEVVLQIMGKVRSKIQVPVDISKDDLEKAALDDESMQKWLEGKTIRKVIVVPGKLVNIVAN.

The short motif at 40-51 is the 'HIGH' region element; it reads PYPSGQGLHVGH. Positions 576–580 match the 'KMSKS' region motif; it reads KMSKS. Lys579 provides a ligand contact to ATP.

This sequence belongs to the class-I aminoacyl-tRNA synthetase family.

The protein resides in the cytoplasm. It carries out the reaction tRNA(Leu) + L-leucine + ATP = L-leucyl-tRNA(Leu) + AMP + diphosphate. The polypeptide is Leucine--tRNA ligase (Oceanobacillus iheyensis (strain DSM 14371 / CIP 107618 / JCM 11309 / KCTC 3954 / HTE831)).